A 910-amino-acid chain; its full sequence is Disease susceptibility protein LOV1 (910 aa).

The stretch at 22 to 60 forms a coiled coil; sequence ARLNGIGEQVDGLKRQLGRLQSLLKDADAKKHESERVRN. An NB-ARC domain is found at 169–461; sequence EQSVEALAGH…AAEGIITSSD (293 aa). 6 LRR repeats span residues 584–609, 610–632, 634–655, 700–725, 726–751, and 847–871; these read LPLLRVLDLSRVKFEGGKLPSSIGDL, IHLRFLSLHRAWISHLPSSLRNL, LLLYLNLGFNGMVHVPNVLKEM, MTKLRELSLFITDGSSDTLSSSLGQL, RSLEVLHLYDRQEPRVAYHGGEIVLN, and MPLLRALTICNCRKLKLPGGINYIT.

This sequence belongs to the disease resistance NB-LRR family. RPP8/HRT subfamily.

Confers susceptibility to the fungus Cochliobolus victoriae by conditioning victorin-dependent (victorin is a toxin synthesized by C.victoriae) induction of defense-associated proteins. This Arabidopsis thaliana (Mouse-ear cress) protein is Disease susceptibility protein LOV1 (LOV1).